The primary structure comprises 1217 residues: WD repeat-containing protein on Y chromosome (1217 aa).

8 WD repeats span residues glutamate 155–alanine 199, arginine 323–alanine 362, glycine 366–threonine 405, threonine 456–isoleucine 495, threonine 508–asparagine 547, phenylalanine 595–asparagine 635, lysine 740–alanine 779, and glycine 823–leucine 862. Disordered stretches follow at residues glutamine 910 to threonine 929 and alanine 1033 to proline 1217. The segment covering glutamate 919–threonine 929 has biased composition (acidic residues). 3 stretches are compositionally biased toward polar residues: residues arginine 1041–isoleucine 1054, phenylalanine 1085–lysine 1107, and proline 1137–asparagine 1179. Over residues lysine 1181 to lysine 1190 the composition is skewed to low complexity. A compositionally biased stretch (polar residues) spans arginine 1198 to alanine 1210.

This is WD repeat-containing protein on Y chromosome from Drosophila mojavensis (Fruit fly).